We begin with the raw amino-acid sequence, 345 residues long: Phosphate acyltransferase (345 aa).

This sequence belongs to the PlsX family. In terms of assembly, homodimer. Probably interacts with PlsY.

Its subcellular location is the cytoplasm. It catalyses the reaction a fatty acyl-[ACP] + phosphate = an acyl phosphate + holo-[ACP]. Its pathway is lipid metabolism; phospholipid metabolism. Its function is as follows. Catalyzes the reversible formation of acyl-phosphate (acyl-PO(4)) from acyl-[acyl-carrier-protein] (acyl-ACP). This enzyme utilizes acyl-ACP as fatty acyl donor, but not acyl-CoA. The sequence is that of Phosphate acyltransferase from Wolbachia pipientis wMel.